We begin with the raw amino-acid sequence, 817 residues long: MMKTEPRGPGGPLRSASPHRSAYEAGIQALKPPDAPGPDEAPKAAHHKKYGSNVHRIKSMFLQMGTTAGPPGEAGGGAGMAEAPRASDRGVRLSLPRASSLNENVDHSALLKLGTSVSERVSRFDSKPAPSAQPAPPPHPPSRLQETRKLFERSVPAASGGDKEAVARRLLRQERAGLQDRKLDVVVRFNGSTEALDKLDADAVSPTVSQLSAVFEKADSRTGLHRAPGPPRAAGAPQVNSKLVTKRSRVFQPPPPPPAPSGDGATEKERGPGGQQPPQHRVAPARPPPKPREVRKIKPVEVEESGESEAESAPGEVIQAEVTVHAALENGSTPATTASPAPEEPKAEAVPEEEAAASVATLERGVDNGRAPDMAPEEVDESKKEDFSEADLVDVSAYSGLGEDSGGSALEEDDEEDEEDGEPPYEPESGCVEIPGLSEEEDPAPSRKIHFSTAPIQVFSTYSNEDYDRRNEDVDPMAASAEYELEKRVERLELFPVELEKDSEGLGISIIGMGAGADMGLEKLGIFVKTVTEGGAAHRDGRIQVNDLLVEVDGTSLVGVTQSFAASVLRNTKGRVRFMIGRERPGEQSEVAQLIQQTLEQERWQREMMEQRYAQYGEDDEETGEYATDEDEELSPTFPGGEMAIEVFELAENEDALSPVEMEPEKLVHKFKELQIKHAVTEAEIQQLKRKLQSLEQEKGRWRVEKAQLEQSVEENKERMEKLEGYWGEAQSLCQAVDEHLRETQAQYQALERKYSKAKRLIKDYQQKEIEFLKKETAQRRVLEESELARKEEMDKLLDKISELEGNLQTLRNSNST.

Disordered stretches follow at residues 1–52 (MMKT…KYGS) and 64–163 (MGTT…GGDK). 2 actin-binding regions span residues 1–154 (MMKT…FERS) and 164–282 (EAVA…QHRV). S15 carries the phosphoserine; by MAPK1 modification. S17 bears the Phosphoserine; by CDK5 mark. S94 carries the phosphoserine; by PKA modification. A phosphoserine mark is found at S100 and S116. The interaction with D(2) dopamine receptor stretch occupies residues 100–371 (SLNENVDHSA…LERGVDNGRA (272 aa)). The span at 131-141 (SAQPAPPPHPP) shows a compositional bias: pro residues. Residues 169-255 (RLLRQERAGL…KRSRVFQPPP (87 aa)) form an interaction with ADRA2A, ADRA2B and ADRA2C region. The residue at position 192 (S192) is a Phosphoserine. T193 carries the phosphothreonine modification. S205 is subject to Phosphoserine; by MAPK1. Position 207 is a phosphothreonine (T207). Positions 216-451 (EKADSRTGLH…DPAPSRKIHF (236 aa)) are disordered. A compositionally biased stretch (basic and acidic residues) spans 290–301 (KPREVRKIKPVE). Composition is skewed to low complexity over residues 332 to 341 (STPATTASPA) and 399 to 409 (SGLGEDSGGSA). The span at 410–425 (LEEDDEEDEEDGEPPY) shows a compositional bias: acidic residues. The interval 417 to 494 (DEEDGEPPYE…LEKRVERLEL (78 aa)) is interaction with protein phosphatase 1. S438 bears the Phosphoserine mark. The PP1-binding motif signature appears at 447-451 (RKIHF). The segment at 480-525 (SAEYELEKRVERLELFPVELEKDSEGLGISIIGMGAGADMGLEKLG) is interaction with RGS2. Residues 496-584 (PVELEKDSEG…RVRFMIGRER (89 aa)) form the PDZ domain. A coiled-coil region spans residues 595-616 (IQQTLEQERWQREMMEQRYAQY). An interaction with TGN38 region spans residues 595–816 (IQQTLEQERW…NLQTLRNSNS (222 aa)). S658 is subject to Phosphoserine. A coiled-coil region spans residues 665–816 (EKLVHKFKEL…NLQTLRNSNS (152 aa)).

Possibly exists as a homodimer, homotrimer or a homotetramer. Interacts with F-actin, PPP1CA, neurabin-1, TGN38 and D(2) dopamine receptor. Interacts with RGS1, RGS2, RGS4, RGS19 and ADRA1B, ADRA2A, ADRA2B, ADRA2C, CDKN2A, PPP1R2, RASGFR1 and TIAM1. Interacts (via C-terminus) with SPATA13 (via C-terminal tail). Interacts with DCLK2. Interacts with ADRA2B. Post-translationally, stimulation of D1 (but not D2) dopamine receptors induces Ser-94 phosphorylation. Dephosphorylation of Ser-94 is mediated mainly by PP1 and to a lesser extent by PP2A. Phosphorylation of spinophilin disrupts its association with F-actin, but does not affect its binding to PP1.

The protein resides in the cytoplasm. Its subcellular location is the cytoskeleton. It localises to the nucleus. The protein localises to the postsynaptic density. It is found in the cell junction. The protein resides in the adherens junction. Its subcellular location is the cell projection. It localises to the dendritic spine. The protein localises to the cell membrane. It is found in the lamellipodium. The protein resides in the filopodium. Its subcellular location is the ruffle membrane. Its function is as follows. Seems to act as a scaffold protein in multiple signaling pathways. Modulates excitatory synaptic transmission and dendritic spine morphology. Binds to actin filaments (F-actin) and shows cross-linking activity. Binds along the sides of the F-actin. May play an important role in linking the actin cytoskeleton to the plasma membrane at the synaptic junction. Believed to target protein phosphatase 1/PP1 to dendritic spines, which are rich in F-actin, and regulates its specificity toward ion channels and other substrates, such as AMPA-type and NMDA-type glutamate receptors. Plays a role in regulation of G-protein coupled receptor signaling, including dopamine D2 receptors and alpha-adrenergic receptors. May establish a signaling complex for dopaminergic neurotransmission through D2 receptors by linking receptors downstream signaling molecules and the actin cytoskeleton. Binds to ADRA1B and RGS2 and mediates regulation of ADRA1B signaling. May confer to Rac signaling specificity by binding to both, RacGEFs and Rac effector proteins. Probably regulates p70 S6 kinase activity by forming a complex with TIAM1. Required for hepatocyte growth factor (HGF)-induced cell migration. This is Neurabin-2 (Ppp1r9b) from Mus musculus (Mouse).